We begin with the raw amino-acid sequence, 132 residues long: Small ribosomal subunit protein uS8 (132 aa).

It belongs to the universal ribosomal protein uS8 family. Part of the 30S ribosomal subunit. Contacts proteins S5 and S12.

In terms of biological role, one of the primary rRNA binding proteins, it binds directly to 16S rRNA central domain where it helps coordinate assembly of the platform of the 30S subunit. This chain is Small ribosomal subunit protein uS8, found in Sinorhizobium medicae (strain WSM419) (Ensifer medicae).